The following is a 443-amino-acid chain: KH domain-containing, RNA-binding, signal transduction-associated protein 1 (443 aa).

The interval 1–95 (MQRRDDPAAR…LLPPSATAAA (95 aa)) is disordered. 2 positions are modified to phosphoserine: S18 and S20. Position 21 is an N6-acetyllysine (K21). Position 29 is a phosphoserine (S29). Position 33 is a phosphothreonine (T33). 2 positions are modified to asymmetric dimethylarginine; by PRMT1: R45 and R52. Residue S58 is modified to Phosphoserine. Pro residues predominate over residues 61-72 (TQPPPLLPPSNP). Low complexity predominate over residues 81–95 (SAPTPLLPPSATAAA). T84 carries the post-translational modification Phosphothreonine; by MAPK1. Residues K96 and K102 each participate in a glycyl lysine isopeptide (Lys-Gly) (interchain with G-Cter in SUMO2) cross-link. The tract at residues 100–260 (ENKYLPELMA…VKKFLVPDMM (161 aa)) is involved in homodimerization. S113 is subject to Phosphoserine. Residue K139 forms a Glycyl lysine isopeptide (Lys-Gly) (interchain with G-Cter in SUMO2) linkage. The residue at position 150 (S150) is a Phosphoserine. Residues 171 to 197 (NFVGKILGPQGNTIKRLQEETGAKISV) form the KH domain. K175 is subject to N6-acetyllysine; alternate. Residue K175 forms a Glycyl lysine isopeptide (Lys-Gly) (interchain with G-Cter in SUMO2); alternate linkage. Residue T183 is modified to Phosphothreonine. Positions 280–317 (PSRGRGVSVRGRGAAPPPPPVPRGRGVGPPRGALVRGT) are disordered. An omega-N-methylarginine mark is found at R282, R284, and R291. A compositionally biased stretch (low complexity) spans 283–293 (GRGVSVRGRGA). Residue R304 is modified to Asymmetric dimethylarginine; by PRMT1. Over residues 307-316 (GPPRGALVRG) the composition is skewed to low complexity. R310 and R315 each carry omega-N-methylarginine; by PRMT1. Dimethylated arginine; alternate is present on R320. Position 320 is an omega-N-methylarginine; by PRMT1; alternate (R320). R325 carries the post-translational modification Omega-N-methylarginine; by PRMT1. The interval 326–345 (GATVTRGVPPPPTVRGAPTP) is disordered. R331 and R340 each carry dimethylated arginine; alternate. Omega-N-methylarginine; by PRMT1; alternate is present on residues R331 and R340. R331 carries the asymmetric dimethylarginine; alternate modification. Positions 351–443 (GIQRIPLPPT…AYREHPYGRY (93 aa)) are interaction with HNRNPA1. At Y387 the chain carries Phosphotyrosine. S390 is subject to Phosphoserine. Residues 400 to 420 (GHGELQDSYEAYGQDDWNGTR) are interaction with ZBTB7A. Positions 411-443 (YGQDDWNGTRPSLKAPPARPVKGAYREHPYGRY) are disordered. K432 is covalently cross-linked (Glycyl lysine isopeptide (Lys-Gly) (interchain with G-Cter in SUMO2)). A compositionally biased stretch (basic and acidic residues) spans 434-443 (AYREHPYGRY). 3 positions are modified to phosphotyrosine; by PTK6: Y435, Y440, and Y443.

It belongs to the KHDRBS family. In terms of assembly, self-associates to form homooligomers when bound to RNA, oligomerization appears to be limited when binding to proteins. Interacts with KHDRBS3/SLIM-2. Forms a trimeric complex in the nucleus consisting of BANP, HDAC6 and KHDRBS1/SAM68; HDAC6 keeps KHDRBS1 in a deacetylated state which inhibits the inclusion of CD44 alternate exons. The complex is disrupted by MAPK1/MAPK3-mediated phosphorylation of BANP which results in BANP export to the cytoplasm. This facilitates acetylation of KHDRBS1 and CD44 variant exon inclusion. Interacts with KHDRBS2/SLIM-1; heterooligomer formation of KHDRBS family proteins may modulate RNA substrate specificity. Interacts with PIK3R1, PLCG1. Interacts with RASA1, GRB2, SRC, CBP, PRMT1, APC, HNRNPA1. Interacts with PTK6 (via SH3 and SH2 domains). Forms a complex with ILF2, ILF3, YLPM1, RBMX, NCOA5 and PPP1CA. Binds WBP4/FBP21 (via WW domains), FNBP4/FBP30 (via WW domains). Interacts (via Arg/Gly-rich-flanked Pro-rich regions) with FYN (via the SH3 domain). Interacts with the non-receptor tyrosine kinase SRMS; the interaction leads to phosphorylation of KHDRBS1. Interacts with ZBTB7A; negatively regulates KHDRBS1 splicing activity toward BCL2L1. In terms of processing, tyrosine phosphorylated by several non-receptor tyrosine kinases including LCK, FYN and JAK3. Also tyrosine phosphorylated by the non-receptor tyrosine kinase SRMS in an EGF-dependent manner. Phosphorylation by PTK6 negatively regulates its RNA binding ability. Phosphorylation by PTK6 at Tyr-440 dictates the nuclear localization of KHDRBS1. Post-translationally, acetylated. Positively correlates with ability to bind RNA. Deacetylated by HDAC6; this regulates alternative splicing by inhibiting the inclusion of CD44 alternate exons. Arginine methylation is required for nuclear localization, Inhibits interaction with Src-like SH3 domains, but not interaction with WW domains of WBP4/FBP21 and FNBP4/FBP30.

It localises to the nucleus. The protein resides in the cytoplasm. The protein localises to the membrane. In terms of biological role, recruited and tyrosine phosphorylated by several receptor systems, for example the T-cell, leptin and insulin receptors. Once phosphorylated, functions as an adapter protein in signal transduction cascades by binding to SH2 and SH3 domain-containing proteins. Role in G2-M progression in the cell cycle. Represses CBP-dependent transcriptional activation apparently by competing with other nuclear factors for binding to CBP. Also acts as a putative regulator of mRNA stability and/or translation rates and mediates mRNA nuclear export. Positively regulates the association of constitutive transport element (CTE)-containing mRNA with large polyribosomes and translation initiation. May not be involved in the nucleocytoplasmic export of unspliced (CTE)-containing RNA species. RNA-binding protein that plays a role in the regulation of alternative splicing and influences mRNA splice site selection and exon inclusion. Binds to RNA containing 5'-[AU]UAA-3' as a bipartite motif spaced by more than 15 nucleotides. Binds poly(A). Can regulate CD44 alternative splicing in a Ras pathway-dependent manner. In cooperation with HNRNPA1 modulates alternative splicing of BCL2L1 by promoting splicing toward isoform Bcl-X(S), and of SMN1. Can regulate alternative splicing of NRXN1 and NRXN3 in the laminin G-like domain 6 containing the evolutionary conserved neurexin alternative spliced segment 4 (AS4) involved in neurexin selective targeting to postsynaptic partners. In a neuronal activity-dependent manner cooperates synergistically with KHDRBS2/SLIM-1 in regulation of NRXN1 exon skipping at AS4. The cooperation with KHDRBS2/SLIM-1 is antagonistic for regulation of NXRN3 alternative splicing at AS4. The chain is KH domain-containing, RNA-binding, signal transduction-associated protein 1 from Rattus norvegicus (Rat).